The primary structure comprises 361 residues: Alanine racemase 2 (361 aa).

Lys30 functions as the Proton acceptor; specific for D-alanine in the catalytic mechanism. Lys30 carries the post-translational modification N6-(pyridoxal phosphate)lysine. Position 122 (Arg122) interacts with substrate. Tyr256 functions as the Proton acceptor; specific for L-alanine in the catalytic mechanism. Met303 provides a ligand contact to substrate.

It belongs to the alanine racemase family. Pyridoxal 5'-phosphate is required as a cofactor.

The enzyme catalyses L-alanine = D-alanine. It participates in amino-acid biosynthesis; D-alanine biosynthesis; D-alanine from L-alanine: step 1/1. Catalyzes the interconversion of L-alanine and D-alanine. May also act on other amino acids. The sequence is that of Alanine racemase 2 (alr2) from Staphylococcus aureus (strain Mu50 / ATCC 700699).